The chain runs to 367 residues: Glutamate 5-kinase (367 aa).

An ATP-binding site is contributed by Lys10. Substrate is bound by residues Ser50, Asp137, and Asn149. Residues 169–170 (TD) and 211–217 (TGGMSTK) contribute to the ATP site. Positions 275–353 (AGEITVDDGA…QQIAEILGYE (79 aa)) constitute a PUA domain.

Belongs to the glutamate 5-kinase family.

The protein localises to the cytoplasm. It carries out the reaction L-glutamate + ATP = L-glutamyl 5-phosphate + ADP. It participates in amino-acid biosynthesis; L-proline biosynthesis; L-glutamate 5-semialdehyde from L-glutamate: step 1/2. Functionally, catalyzes the transfer of a phosphate group to glutamate to form L-glutamate 5-phosphate. The chain is Glutamate 5-kinase from Pectobacterium atrosepticum (strain SCRI 1043 / ATCC BAA-672) (Erwinia carotovora subsp. atroseptica).